The following is a 351-amino-acid chain: Glycerol-3-phosphate dehydrogenase 1-like protein (351 aa).

Position 12-17 (12-17) interacts with NAD(+); the sequence is GSGNWG. Lys122 contributes to the substrate binding site. Ala155 provides a ligand contact to NAD(+). Lys206 functions as the Proton acceptor in the catalytic mechanism. Positions 271, 298, and 300 each coordinate NAD(+). 271 to 272 is a binding site for substrate; that stretch reads RN.

It belongs to the NAD-dependent glycerol-3-phosphate dehydrogenase family. In terms of assembly, interacts with SCN5A.

It localises to the cytoplasm. It carries out the reaction sn-glycerol 3-phosphate + NAD(+) = dihydroxyacetone phosphate + NADH + H(+). Plays a role in regulating cardiac sodium current; decreased enzymatic activity with resulting increased levels of glycerol 3-phosphate activating the DPD1L-dependent SCN5A phosphorylation pathway, may ultimately lead to decreased sodium current; cardiac sodium current may also be reduced due to alterations of NAD(H) balance induced by DPD1L. This chain is Glycerol-3-phosphate dehydrogenase 1-like protein (GPD1L), found in Pongo abelii (Sumatran orangutan).